A 708-amino-acid chain; its full sequence is Leukotoxin translocation ATP-binding protein LktB (708 aa).

A Peptidase C39 domain is found at 1 to 126 (MEANHQRNDL…ACYQGQLILV (126 aa)). In terms of domain architecture, ABC transmembrane type-1 spans 155–437 (FLETLIVSIF…LAQLWQDFQQ (283 aa)). 5 consecutive transmembrane segments (helical) span residues 159-179 (LIVS…FQVV), 192-212 (LNII…LSGL), 270-290 (ALTS…MWYY), 296-316 (LVIL…SPIL), and 389-409 (VMVI…LSIG). One can recognise an ABC transporter domain in the interval 469-704 (ISFKNIRFRY…SNGLYSYLHQ (236 aa)). 503 to 510 (GRSGSGKS) is a binding site for ATP.

It belongs to the ABC transporter superfamily. Protein-1 exporter (TC 3.A.1.109) family. In terms of assembly, homodimer.

The protein resides in the cell inner membrane. The enzyme catalyses ATP + H2O + proteinSide 1 = ADP + phosphate + proteinSide 2.. Its function is as follows. Part of the ABC transporter complex LktBD involved in leukotoxin export. Transmembrane domains (TMD) form a pore in the inner membrane and the ATP-binding domain (NBD) is responsible for energy generation. This Mannheimia haemolytica (Pasteurella haemolytica) protein is Leukotoxin translocation ATP-binding protein LktB (lktB).